The sequence spans 263 residues: uncharacterized protein (263 aa).

The signal sequence occupies residues 1 to 22; that stretch reads MGYLKRLVLYIVIMVMSVFIIG. C23 carries the N-palmitoyl cysteine lipid modification. The S-diacylglycerol cysteine moiety is linked to residue C23.

The protein belongs to the staphylococcal tandem lipoprotein family.

It localises to the cell membrane. This is an uncharacterized protein from Staphylococcus aureus (strain N315).